Consider the following 249-residue polypeptide: NADH dehydrogenase [ubiquinone] flavoprotein 2, mitochondrial (249 aa).

The N-terminal 32 residues, 1–32 (MFFSAALRARAAGLTAQWGRHVRNLHKTAMQN), are a transit peptide targeting the mitochondrion. Lys-61 bears the N6-acetyllysine mark. Residues Cys-135, Cys-140, Cys-176, and Cys-180 each coordinate [2Fe-2S] cluster. Tyr-193 is modified (phosphotyrosine; by SRC). Residues 213–249 (IPKPGPRSGRFSCEPAGGLTSLTEPPKGPGFGVQAGL) are disordered.

The protein belongs to the complex I 24 kDa subunit family. In terms of assembly, core subunit of respiratory chain NADH dehydrogenase (Complex I) which is composed of 45 different subunits. This is a component of the flavoprotein-sulfur (FP) fragment of the enzyme. [2Fe-2S] cluster is required as a cofactor.

Its subcellular location is the mitochondrion inner membrane. The enzyme catalyses a ubiquinone + NADH + 5 H(+)(in) = a ubiquinol + NAD(+) + 4 H(+)(out). In terms of biological role, core subunit of the mitochondrial membrane respiratory chain NADH dehydrogenase (Complex I) which catalyzes electron transfer from NADH through the respiratory chain, using ubiquinone as an electron acceptor. Parts of the peripheral arm of the enzyme, where the electrons from NADH are accepted by flavin mononucleotide (FMN) and then passed along a chain of iron-sulfur clusters by electron tunnelling to the final acceptor ubiquinone. Contains one iron-sulfur cluster. In Gorilla gorilla gorilla (Western lowland gorilla), this protein is NADH dehydrogenase [ubiquinone] flavoprotein 2, mitochondrial.